The sequence spans 147 residues: Hemoglobin subunit beta (147 aa).

In terms of domain architecture, Globin spans 2 to 147; that stretch reads HWEDAEKQYI…ISHSLGREYH (146 aa). His63 and His92 together coordinate heme b.

Belongs to the globin family. In terms of assembly, heterotetramer of two alpha chains and two beta chains. In terms of tissue distribution, red blood cells.

Functionally, involved in oxygen transport from the lung to the various peripheral tissues. This is Hemoglobin subunit beta (HBB) from Lepidosiren paradoxus (South American lungfish).